Here is a 283-residue protein sequence, read N- to C-terminus: Coiled-coil domain-containing protein 42 homolog (283 aa).

2 coiled-coil regions span residues 31 to 139 (ATQL…LQRY) and 174 to 204 (QDLR…HRVS).

It belongs to the CFAP73 family.

The sequence is that of Coiled-coil domain-containing protein 42 homolog from Monosiga brevicollis (Choanoflagellate).